Reading from the N-terminus, the 344-residue chain is DNA-directed RNA polymerase subunit alpha (344 aa).

Residues 1-238 (MKVIKTAPLI…KQLGVFGERP (238 aa)) are alpha N-terminal domain (alpha-NTD). An alpha C-terminal domain (alpha-CTD) region spans residues 254–344 (AKDLSAKIES…EKLEDKGGND (91 aa)).

The protein belongs to the RNA polymerase alpha chain family. In terms of assembly, homodimer. The RNAP catalytic core consists of 2 alpha, 1 beta, 1 beta' and 1 omega subunit. When a sigma factor is associated with the core the holoenzyme is formed, which can initiate transcription.

The enzyme catalyses RNA(n) + a ribonucleoside 5'-triphosphate = RNA(n+1) + diphosphate. Functionally, DNA-dependent RNA polymerase catalyzes the transcription of DNA into RNA using the four ribonucleoside triphosphates as substrates. This Helicobacter pylori (strain J99 / ATCC 700824) (Campylobacter pylori J99) protein is DNA-directed RNA polymerase subunit alpha.